A 242-amino-acid chain; its full sequence is uncharacterized protein (242 aa).

2 disordered regions span residues 43–70 (SRRS…TSKD) and 112–162 (RMSR…VTPR). Over residues 58 to 70 (QSVSGRKNSTSKD) the composition is skewed to polar residues. 2 stretches are compositionally biased toward low complexity: residues 122–139 (ERAA…AGHA) and 147–162 (ADGA…VTPR).

This is an uncharacterized protein from Homo sapiens (Human).